The following is a 414-amino-acid chain: Poly(3-hydroxyalkanoate) depolymerase C (414 aa).

Positions 1 to 37 (MLAKQIKKANSRSTLLRKSLLFAAPIILAVSSSSVYA) are cleaved as a signal peptide. The active-site Charge relay system is Ser-154.

It belongs to the AB hydrolase superfamily. Lipase family.

Its subcellular location is the secreted. Functionally, specific for poly(hydroxyalkanoic acid) consisting of monomers of four or five carbon atoms and for P-nitrophenylbutyrate as substrates. This is Poly(3-hydroxyalkanoate) depolymerase C (phaZ1) from Paucimonas lemoignei (Pseudomonas lemoignei).